The sequence spans 257 residues: Geranylgeranylglyceryl phosphate synthase (257 aa).

The Mg(2+) site is built by aspartate 27 and threonine 57. Residues 175–181, 207–208, and 229–230 contribute to the sn-glycerol 1-phosphate site; these read YLEAGSG, GG, and GN.

It belongs to the GGGP/HepGP synthase family. Group II subfamily. It depends on Mg(2+) as a cofactor.

It is found in the cytoplasm. It catalyses the reaction sn-glycerol 1-phosphate + (2E,6E,10E)-geranylgeranyl diphosphate = sn-3-O-(geranylgeranyl)glycerol 1-phosphate + diphosphate. It functions in the pathway membrane lipid metabolism; glycerophospholipid metabolism. In terms of biological role, prenyltransferase that catalyzes the transfer of the geranylgeranyl moiety of geranylgeranyl diphosphate (GGPP) to the C3 hydroxyl of sn-glycerol-1-phosphate (G1P). This reaction is the first ether-bond-formation step in the biosynthesis of archaeal membrane lipids. This chain is Geranylgeranylglyceryl phosphate synthase, found in Sulfolobus acidocaldarius (strain ATCC 33909 / DSM 639 / JCM 8929 / NBRC 15157 / NCIMB 11770).